Consider the following 430-residue polypeptide: Glycine reductase complex component B subunits alpha and beta (430 aa).

C242 (schiff-base intermediate with substrate; via pyruvic acid) is an active-site residue. C242 is modified (pyruvic acid (Cys)).

In terms of assembly, heterohexamer of two alpha, two beta and two gamma subunits. Component of the glycine reductase complex, together with components A and C. PB is substrate specific. The peptide chain is cleaved into beta and alpha chains, and the alpha chain N-terminal cysteine is deaminated and oxidized to form a reactive pyruvoyl group.

The enzyme catalyses acetyl phosphate + [thioredoxin]-disulfide + NH4(+) + H2O = [thioredoxin]-dithiol + glycine + phosphate + H(+). Its function is as follows. In the first step of glycine reductase, the substrate is bound to component PB via a Schiff base intermediate. Then the PB-activated substrate is nucleophilically attacked by the selenol anion of component PA to transform it to a carboxymethylated selenoether and the respective amine. By action of component PC, acetyl phosphate is formed, leaving component PA in its oxidized state. Finally component PA becomes reduced by the thioredoxin system to start a new catalytic cycle of reductive deamination. The sequence is that of Glycine reductase complex component B subunits alpha and beta (grdE) from Acetoanaerobium sticklandii (strain ATCC 12662 / DSM 519 / JCM 1433 / CCUG 9281 / NCIMB 10654 / HF) (Clostridium sticklandii).